Here is a 997-residue protein sequence, read N- to C-terminus: Protein translocase subunit SecA (997 aa).

Residues Q84, 102-106 (GEGKT), and D582 contribute to the ATP site. A disordered region spans residues 950-997 (PYVPVPEAKPEPSEVFGVERKRATPPPQPGLSRAERRRLMRQEKKRKK). The span at 957-971 (AKPEPSEVFGVERKR) shows a compositional bias: basic and acidic residues. The segment covering 984 to 997 (ERRRLMRQEKKRKK) has biased composition (basic residues).

It belongs to the SecA family. As to quaternary structure, part of the essential Sec protein translocation apparatus which comprises SecA, SecYEG and auxiliary proteins SecDF. Other proteins may also be involved. Monomer and homodimer.

Its subcellular location is the cell inner membrane. It is found in the cytoplasm. It catalyses the reaction ATP + H2O + cellular proteinSide 1 = ADP + phosphate + cellular proteinSide 2.. In terms of biological role, part of the Sec protein translocase complex. Interacts with the SecYEG preprotein conducting channel. Has a central role in coupling the hydrolysis of ATP to the transfer of proteins into and across the cell membrane, serving as an ATP-driven molecular motor driving the stepwise translocation of polypeptide chains across the membrane. This Thermus thermophilus (strain ATCC 27634 / DSM 579 / HB8) protein is Protein translocase subunit SecA.